We begin with the raw amino-acid sequence, 158 residues long: Cyclic pyranopterin monophosphate synthase (158 aa).

Residues 74 to 76 and 112 to 113 each bind substrate; these read MCH and ME. The active site involves D127.

It belongs to the MoaC family. Homohexamer; trimer of dimers.

The enzyme catalyses (8S)-3',8-cyclo-7,8-dihydroguanosine 5'-triphosphate = cyclic pyranopterin phosphate + diphosphate. It participates in cofactor biosynthesis; molybdopterin biosynthesis. Catalyzes the conversion of (8S)-3',8-cyclo-7,8-dihydroguanosine 5'-triphosphate to cyclic pyranopterin monophosphate (cPMP). The polypeptide is Cyclic pyranopterin monophosphate synthase (Helicobacter pylori (strain J99 / ATCC 700824) (Campylobacter pylori J99)).